The primary structure comprises 282 residues: 4-diphosphocytidyl-2-C-methyl-D-erythritol kinase (282 aa).

The active site involves Lys-12. 95–105 serves as a coordination point for ATP; the sequence is PMGGGIGGGSS. Residue Asp-137 is part of the active site.

It belongs to the GHMP kinase family. IspE subfamily.

The enzyme catalyses 4-CDP-2-C-methyl-D-erythritol + ATP = 4-CDP-2-C-methyl-D-erythritol 2-phosphate + ADP + H(+). Its pathway is isoprenoid biosynthesis; isopentenyl diphosphate biosynthesis via DXP pathway; isopentenyl diphosphate from 1-deoxy-D-xylulose 5-phosphate: step 3/6. Functionally, catalyzes the phosphorylation of the position 2 hydroxy group of 4-diphosphocytidyl-2C-methyl-D-erythritol. The sequence is that of 4-diphosphocytidyl-2-C-methyl-D-erythritol kinase from Pseudomonas aeruginosa (strain UCBPP-PA14).